Consider the following 1004-residue polypeptide: 2-oxoglutarate dehydrogenase E1 component (1004 aa).

It belongs to the alpha-ketoglutarate dehydrogenase family. As to quaternary structure, homodimer. Part of the 2-oxoglutarate dehydrogenase (OGDH) complex composed of E1 (2-oxoglutarate dehydrogenase), E2 (dihydrolipoamide succinyltransferase) and E3 (dihydrolipoamide dehydrogenase); the complex contains multiple copies of the three enzymatic components (E1, E2 and E3). Thiamine diphosphate is required as a cofactor.

The enzyme catalyses N(6)-[(R)-lipoyl]-L-lysyl-[protein] + 2-oxoglutarate + H(+) = N(6)-[(R)-S(8)-succinyldihydrolipoyl]-L-lysyl-[protein] + CO2. Functionally, E1 component of the 2-oxoglutarate dehydrogenase (OGDH) complex which catalyzes the decarboxylation of 2-oxoglutarate, the first step in the conversion of 2-oxoglutarate to succinyl-CoA and CO(2). This chain is 2-oxoglutarate dehydrogenase E1 component, found in Brucella abortus (strain S19).